A 286-amino-acid chain; its full sequence is Rhomboid-type serine protease 2 (286 aa).

Transmembrane regions (helical) follow at residues 18-38 (ITQY…LLVI), 66-86 (SFYL…VGLF), 99-119 (VFTG…FCIV), 122-142 (LLYP…FMSF), 164-183 (VSIP…MVLI), and 188-210 (FWGH…KFLY). Ser133 functions as the Nucleophile in the catalytic mechanism. His191 is an active-site residue.

The protein belongs to the peptidase S54 family.

Its subcellular location is the golgi apparatus membrane. It localises to the golgi apparatus. The protein resides in the cis-Golgi network membrane. The enzyme catalyses Cleaves type-1 transmembrane domains using a catalytic dyad composed of serine and histidine that are contributed by different transmembrane domains.. Its function is as follows. Probable rhomboid-type serine protease that catalyzes intramembrane proteolysis. This Debaryomyces hansenii (strain ATCC 36239 / CBS 767 / BCRC 21394 / JCM 1990 / NBRC 0083 / IGC 2968) (Yeast) protein is Rhomboid-type serine protease 2 (RBD2).